The sequence spans 402 residues: Argininosuccinate synthase (402 aa).

Residues 10-18 and alanine 38 each bind ATP; that span reads AYSGGVDTS. Position 89 (tyrosine 89) interacts with L-citrulline. Glycine 119 lines the ATP pocket. Residues threonine 121, asparagine 125, and aspartate 126 each contribute to the L-aspartate site. An L-citrulline-binding site is contributed by asparagine 125. L-citrulline-binding residues include arginine 129, serine 177, serine 186, glutamate 262, and tyrosine 274.

This sequence belongs to the argininosuccinate synthase family. Type 1 subfamily. As to quaternary structure, homotetramer.

The protein localises to the cytoplasm. The enzyme catalyses L-citrulline + L-aspartate + ATP = 2-(N(omega)-L-arginino)succinate + AMP + diphosphate + H(+). Its pathway is amino-acid biosynthesis; L-arginine biosynthesis; L-arginine from L-ornithine and carbamoyl phosphate: step 2/3. The protein is Argininosuccinate synthase of Prochlorococcus marinus (strain SARG / CCMP1375 / SS120).